Consider the following 338-residue polypeptide: Holliday junction branch migration complex subunit RuvB (338 aa).

The large ATPase domain (RuvB-L) stretch occupies residues 1-180 (MERLLDNKFS…FGIIERLDYY (180 aa)). Positions 19, 20, 61, 64, 65, 66, 170, 180, and 217 each coordinate ATP. Thr-65 contacts Mg(2+). Residues 181–251 (TVEELSQIVM…VAKSGLEMFE (71 aa)) are small ATPAse domain (RuvB-S). The tract at residues 254 to 338 (EYGLDLVDRN…FKLKESGDNR (85 aa)) is head domain (RuvB-H). DNA contacts are provided by Lys-309 and Arg-314.

It belongs to the RuvB family. As to quaternary structure, homohexamer. Forms an RuvA(8)-RuvB(12)-Holliday junction (HJ) complex. HJ DNA is sandwiched between 2 RuvA tetramers; dsDNA enters through RuvA and exits via RuvB. An RuvB hexamer assembles on each DNA strand where it exits the tetramer. Each RuvB hexamer is contacted by two RuvA subunits (via domain III) on 2 adjacent RuvB subunits; this complex drives branch migration. In the full resolvosome a probable DNA-RuvA(4)-RuvB(12)-RuvC(2) complex forms which resolves the HJ.

The protein localises to the cytoplasm. The catalysed reaction is ATP + H2O = ADP + phosphate + H(+). Functionally, the RuvA-RuvB-RuvC complex processes Holliday junction (HJ) DNA during genetic recombination and DNA repair, while the RuvA-RuvB complex plays an important role in the rescue of blocked DNA replication forks via replication fork reversal (RFR). RuvA specifically binds to HJ cruciform DNA, conferring on it an open structure. The RuvB hexamer acts as an ATP-dependent pump, pulling dsDNA into and through the RuvAB complex. RuvB forms 2 homohexamers on either side of HJ DNA bound by 1 or 2 RuvA tetramers; 4 subunits per hexamer contact DNA at a time. Coordinated motions by a converter formed by DNA-disengaged RuvB subunits stimulates ATP hydrolysis and nucleotide exchange. Immobilization of the converter enables RuvB to convert the ATP-contained energy into a lever motion, pulling 2 nucleotides of DNA out of the RuvA tetramer per ATP hydrolyzed, thus driving DNA branch migration. The RuvB motors rotate together with the DNA substrate, which together with the progressing nucleotide cycle form the mechanistic basis for DNA recombination by continuous HJ branch migration. Branch migration allows RuvC to scan DNA until it finds its consensus sequence, where it cleaves and resolves cruciform DNA. This is Holliday junction branch migration complex subunit RuvB from Caldicellulosiruptor bescii (strain ATCC BAA-1888 / DSM 6725 / KCTC 15123 / Z-1320) (Anaerocellum thermophilum).